Consider the following 434-residue polypeptide: Trigger factor (434 aa).

Positions 161 to 246 (EDRATIDFSG…LKKVEERELP (86 aa)) constitute a PPIase FKBP-type domain.

The protein belongs to the FKBP-type PPIase family. Tig subfamily.

The protein localises to the cytoplasm. It catalyses the reaction [protein]-peptidylproline (omega=180) = [protein]-peptidylproline (omega=0). In terms of biological role, involved in protein export. Acts as a chaperone by maintaining the newly synthesized protein in an open conformation. Functions as a peptidyl-prolyl cis-trans isomerase. This Erwinia tasmaniensis (strain DSM 17950 / CFBP 7177 / CIP 109463 / NCPPB 4357 / Et1/99) protein is Trigger factor.